The primary structure comprises 64 residues: Large ribosomal subunit protein bL28c (64 aa).

This sequence belongs to the bacterial ribosomal protein bL28 family.

It is found in the plastid. The protein resides in the chloroplast. The protein is Large ribosomal subunit protein bL28c of Gracilaria tenuistipitata var. liui (Red alga).